Reading from the N-terminus, the 454-residue chain is MSLCLWKQCLDRLQSELPSTEFSMWIRSLKAKLNNNILEIYAPNQFILDWVKDKYLIHFKKILQDFCGSNSPFIKFKVYQTSKEKKFKKNILQKIQNLNAKPIWDKIPIFKKSSHRSNINKKHSFENFIEGKSNQLARAAASQVAKNPGNSYNPLFLYGGTGLGKTHLLHAIGNGILAYKYNVKIIYMHSERFVQDMVKALQNNAIEKFKLYYRSVDALLIDDIQFFAHKERSQEEFFHTFNALLEGNQQIILTSDRYPKEINGVEDRLKSRFGWGLTVAIDPPELETRVAILIKKADENNIVLSDEVAFFIAKHLRSNVRELEGALNRVIVNANFTHRSITVEFVREALRDILALQEKLVTIANIQKTVAEYYKIKVADLLSRRRSRSVARPRQMAMAMAKELTNHSLPEIGDAFSGRDHTTVLHACRKIEQLRKENHDIKEDFSNLIRTLSV.

The tract at residues 1 to 79 (MSLCLWKQCL…NSPFIKFKVY (79 aa)) is domain I, interacts with DnaA modulators. Residues 79 to 117 (YQTSKEKKFKKNILQKIQNLNAKPIWDKIPIFKKSSHRS) are domain II. Positions 118–334 (NINKKHSFEN…GALNRVIVNA (217 aa)) are domain III, AAA+ region. 4 residues coordinate ATP: G162, G164, K165, and T166. A domain IV, binds dsDNA region spans residues 335 to 454 (NFTHRSITVE…FSNLIRTLSV (120 aa)).

This sequence belongs to the DnaA family. In terms of assembly, oligomerizes as a right-handed, spiral filament on DNA at oriC.

Its subcellular location is the cytoplasm. Its function is as follows. Plays an essential role in the initiation and regulation of chromosomal replication. ATP-DnaA binds to the origin of replication (oriC) to initiate formation of the DNA replication initiation complex once per cell cycle. Binds the DnaA box (a 9 base pair repeat at the origin) and separates the double-stranded (ds)DNA. Forms a right-handed helical filament on oriC DNA; dsDNA binds to the exterior of the filament while single-stranded (ss)DNA is stabiized in the filament's interior. The ATP-DnaA-oriC complex binds and stabilizes one strand of the AT-rich DNA unwinding element (DUE), permitting loading of DNA polymerase. After initiation quickly degrades to an ADP-DnaA complex that is not apt for DNA replication. Binds acidic phospholipids. The chain is Chromosomal replication initiator protein DnaA from Buchnera aphidicola subsp. Schizaphis graminum (strain Sg).